Here is a 193-residue protein sequence, read N- to C-terminus: ATP-dependent Clp protease proteolytic subunit 1 (193 aa).

S98 acts as the Nucleophile in catalysis. H123 is an active-site residue.

The protein belongs to the peptidase S14 family. As to quaternary structure, fourteen ClpP subunits assemble into 2 heptameric rings which stack back to back to give a disk-like structure with a central cavity, resembling the structure of eukaryotic proteasomes.

It localises to the cytoplasm. It catalyses the reaction Hydrolysis of proteins to small peptides in the presence of ATP and magnesium. alpha-casein is the usual test substrate. In the absence of ATP, only oligopeptides shorter than five residues are hydrolyzed (such as succinyl-Leu-Tyr-|-NHMec, and Leu-Tyr-Leu-|-Tyr-Trp, in which cleavage of the -Tyr-|-Leu- and -Tyr-|-Trp bonds also occurs).. In terms of biological role, cleaves peptides in various proteins in a process that requires ATP hydrolysis. Has a chymotrypsin-like activity. Plays a major role in the degradation of misfolded proteins. The chain is ATP-dependent Clp protease proteolytic subunit 1 from Bacillus cereus (strain ZK / E33L).